The following is a 241-amino-acid chain: NH(3)-dependent NAD(+) synthetase (241 aa).

Residue 27–34 (GISGGIDS) participates in ATP binding. Aspartate 33 is a binding site for Mg(2+). A deamido-NAD(+)-binding site is contributed by arginine 109. Threonine 129 contacts ATP. Residue glutamate 134 participates in Mg(2+) binding. Residues lysine 142 and aspartate 149 each contribute to the deamido-NAD(+) site. ATP contacts are provided by lysine 158 and threonine 180. Residue 231-232 (HK) participates in deamido-NAD(+) binding.

The protein belongs to the NAD synthetase family. In terms of assembly, homodimer.

The enzyme catalyses deamido-NAD(+) + NH4(+) + ATP = AMP + diphosphate + NAD(+) + H(+). It participates in cofactor biosynthesis; NAD(+) biosynthesis; NAD(+) from deamido-NAD(+) (ammonia route): step 1/1. Catalyzes the ATP-dependent amidation of deamido-NAD to form NAD. Uses ammonia as a nitrogen source. The protein is NH(3)-dependent NAD(+) synthetase of Thermoplasma acidophilum (strain ATCC 25905 / DSM 1728 / JCM 9062 / NBRC 15155 / AMRC-C165).